The following is a 404-amino-acid chain: Probable tRNA sulfurtransferase (404 aa).

Residues 60-165 (QPIVEALKLV…DEAAYISYEE (106 aa)) enclose the THUMP domain. ATP contacts are provided by residues 183–184 (ML), 208–209 (HF), R265, G287, and Q296.

The protein belongs to the ThiI family.

The protein resides in the cytoplasm. The catalysed reaction is [ThiI sulfur-carrier protein]-S-sulfanyl-L-cysteine + a uridine in tRNA + 2 reduced [2Fe-2S]-[ferredoxin] + ATP + H(+) = [ThiI sulfur-carrier protein]-L-cysteine + a 4-thiouridine in tRNA + 2 oxidized [2Fe-2S]-[ferredoxin] + AMP + diphosphate. It catalyses the reaction [ThiS sulfur-carrier protein]-C-terminal Gly-Gly-AMP + S-sulfanyl-L-cysteinyl-[cysteine desulfurase] + AH2 = [ThiS sulfur-carrier protein]-C-terminal-Gly-aminoethanethioate + L-cysteinyl-[cysteine desulfurase] + A + AMP + 2 H(+). It functions in the pathway cofactor biosynthesis; thiamine diphosphate biosynthesis. Catalyzes the ATP-dependent transfer of a sulfur to tRNA to produce 4-thiouridine in position 8 of tRNAs, which functions as a near-UV photosensor. Also catalyzes the transfer of sulfur to the sulfur carrier protein ThiS, forming ThiS-thiocarboxylate. This is a step in the synthesis of thiazole, in the thiamine biosynthesis pathway. The sulfur is donated as persulfide by IscS. In Streptococcus pyogenes serotype M12 (strain MGAS2096), this protein is Probable tRNA sulfurtransferase.